The primary structure comprises 410 residues: Sprouty-related, EVH1 domain-containing protein 3 (410 aa).

A WH1 domain is found at 1 to 113 (MVRVRAVVMA…KSLLAALAAL (113 aa)). The disordered stretch occupies residues 117-210 (SLTPSSSSSS…PEPSEPLAGA (94 aa)). Low complexity-rich tracts occupy residues 120-130 (PSSSSSSSSPS) and 147-165 (DSSSSHSRQETPPSAAAAP). The KBD domain occupies 195-244 (LPFTGIPEPSEPLAGAGGLGWGGRGYEDYRRSGPPAPLALSTCVVRFAKT). Arginine 240 carries the asymmetric dimethylarginine modification. An Omega-N-methylarginine modification is found at arginine 248. Positions 258 to 288 (LPAPLTEAAPPAPPARPPPGPGPSSAPAKAS) are disordered. Residues 267–281 (PPAPPARPPPGPGPS) show a composition bias toward pro residues. In terms of domain architecture, SPR spans 296-407 (RCVHCRALFR…CAGCGGRHEE (112 aa)).

In terms of assembly, interacts with palmitoyltransferase ZDHHC17/HIP14; the interaction leads to palmitoylation of SPRED3. In terms of processing, phosphorylated on tyrosine. Post-translationally, palmitoylated by ZDHHC17/HIP14. Ubiquitinated.

The protein localises to the cell membrane. Its function is as follows. Tyrosine kinase substrate that inhibits growth-factor-mediated activation of MAP kinase. Inhibits fibroblast growth factor (FGF)-induced retinal lens fiber differentiation, probably by inhibiting FGF-mediated phosphorylation of ERK1/2. Inhibits TGFB-induced epithelial-to-mesenchymal transition in lens epithelial cells. In Homo sapiens (Human), this protein is Sprouty-related, EVH1 domain-containing protein 3 (SPRED3).